The primary structure comprises 713 residues: Serine/threonine-protein kinase SSN3 (713 aa).

One can recognise a Protein kinase domain in the interval 66–484 (YTILGFLSSG…ANQALEHAWF (419 aa)). Position 72–80 (72–80 (LSSGTYGRV)) interacts with ATP. Residues 104 to 120 (NAGTGSGTATVGSGAST) show a composition bias toward low complexity. Positions 104-188 (NAGTGSGTAT…GGSDNTLQLS (85 aa)) are disordered. Polar residues predominate over residues 129 to 142 (QQHQLLDSPSSSLH). Over residues 158-175 (GTPSASPSLSASLGTSTA) the composition is skewed to low complexity. Lys-201 is an ATP binding site. The active-site Proton acceptor is Asp-304. The segment covering 657–672 (SNPATVRSSHSIGSTE) has biased composition (polar residues). Positions 657–713 (SNPATVRSSHSIGSTESITPTTSSQPIPAQPSSAPLARTTNLVATATRNQQRKRQRN) are disordered. Residues 673-691 (SITPTTSSQPIPAQPSSAP) are compositionally biased toward low complexity. The span at 694–705 (RTTNLVATATRN) shows a compositional bias: polar residues.

Belongs to the protein kinase superfamily. CMGC Ser/Thr protein kinase family. CDC2/CDKX subfamily. Component of the srb8-11 complex, a regulatory module of the Mediator complex. It depends on Mg(2+) as a cofactor.

Its subcellular location is the nucleus. The catalysed reaction is L-seryl-[protein] + ATP = O-phospho-L-seryl-[protein] + ADP + H(+). The enzyme catalyses L-threonyl-[protein] + ATP = O-phospho-L-threonyl-[protein] + ADP + H(+). It catalyses the reaction [DNA-directed RNA polymerase] + ATP = phospho-[DNA-directed RNA polymerase] + ADP + H(+). In terms of biological role, component of the srb8-11 complex. The srb8-11 complex is a regulatory module of the Mediator complex which is itself dependent transcription. The srb8-11 complex may be involved in the transcriptional repression of a subset of genes regulated by Mediator. It may inhibit the association of the Mediator complex with RNA polymerase II to form the holoenzyme complex. The srb8-11 complex phosphorylates the C-terminal domain (CTD) of the largest subunit of RNA polymerase II. The protein is Serine/threonine-protein kinase SSN3 (SSN3) of Mycosarcoma maydis (Corn smut fungus).